A 255-amino-acid polypeptide reads, in one-letter code: Pyridoxine 5'-phosphate synthase (255 aa).

Position 12 (asparagine 12) interacts with 3-amino-2-oxopropyl phosphate. Residue 14-15 coordinates 1-deoxy-D-xylulose 5-phosphate; sequence DH. Arginine 23 contributes to the 3-amino-2-oxopropyl phosphate binding site. Histidine 48 acts as the Proton acceptor in catalysis. 1-deoxy-D-xylulose 5-phosphate-binding residues include arginine 50 and histidine 55. Glutamate 75 acts as the Proton acceptor in catalysis. A 1-deoxy-D-xylulose 5-phosphate-binding site is contributed by threonine 105. Histidine 199 acts as the Proton donor in catalysis. 3-amino-2-oxopropyl phosphate contacts are provided by residues glycine 200 and 221–222; that span reads GF.

It belongs to the PNP synthase family. Homooctamer; tetramer of dimers.

It is found in the cytoplasm. The catalysed reaction is 3-amino-2-oxopropyl phosphate + 1-deoxy-D-xylulose 5-phosphate = pyridoxine 5'-phosphate + phosphate + 2 H2O + H(+). Its pathway is cofactor biosynthesis; pyridoxine 5'-phosphate biosynthesis; pyridoxine 5'-phosphate from D-erythrose 4-phosphate: step 5/5. Its function is as follows. Catalyzes the complicated ring closure reaction between the two acyclic compounds 1-deoxy-D-xylulose-5-phosphate (DXP) and 3-amino-2-oxopropyl phosphate (1-amino-acetone-3-phosphate or AAP) to form pyridoxine 5'-phosphate (PNP) and inorganic phosphate. The sequence is that of Pyridoxine 5'-phosphate synthase from Rhodopseudomonas palustris (strain BisB18).